The sequence spans 547 residues: Chaperonin GroEL (547 aa).

Residues 30–33, lysine 51, 87–91, glycine 415, and aspartate 496 contribute to the ATP site; these read TLGP and DGTTT. Residues 528 to 547 are disordered; that stretch reads KEEPMPMRGSGMGGMGGMDF. A compositionally biased stretch (gly residues) spans 537 to 547; that stretch reads SGMGGMGGMDF.

The protein belongs to the chaperonin (HSP60) family. As to quaternary structure, forms a cylinder of 14 subunits composed of two heptameric rings stacked back-to-back. Interacts with the co-chaperonin GroES.

It is found in the cytoplasm. It catalyses the reaction ATP + H2O + a folded polypeptide = ADP + phosphate + an unfolded polypeptide.. Functionally, together with its co-chaperonin GroES, plays an essential role in assisting protein folding. The GroEL-GroES system forms a nano-cage that allows encapsulation of the non-native substrate proteins and provides a physical environment optimized to promote and accelerate protein folding. In Rickettsia canadensis (strain McKiel), this protein is Chaperonin GroEL.